Here is a 125-residue protein sequence, read N- to C-terminus: NADPH-dependent 7-cyano-7-deazaguanine reductase (125 aa).

C41 functions as the Thioimide intermediate in the catalytic mechanism. The active-site Proton donor is the D48. Residues 63 to 65 and 82 to 83 contribute to the substrate site; these read IEL and HE.

Belongs to the GTP cyclohydrolase I family. QueF type 1 subfamily.

The protein resides in the cytoplasm. It carries out the reaction 7-aminomethyl-7-carbaguanine + 2 NADP(+) = 7-cyano-7-deazaguanine + 2 NADPH + 3 H(+). It participates in tRNA modification; tRNA-queuosine biosynthesis. Functionally, catalyzes the NADPH-dependent reduction of 7-cyano-7-deazaguanine (preQ0) to 7-aminomethyl-7-deazaguanine (preQ1). In Sulfurovum sp. (strain NBC37-1), this protein is NADPH-dependent 7-cyano-7-deazaguanine reductase.